A 220-amino-acid chain; its full sequence is MNGFTPEEMSRGGDAAAAVAAVVAAAAAAASAGNGNAAGGGAEVPGAGAVSASGPPGAAGPGPGQLCCLREDGERCGRAAGNASFSKRIQKSISQKKVKIELDKSARHLYICDYHKNLIQSVRNRRKRKGSDDDGGDSPVQDIDTPEVDLYQLQVNTLRRYKRHFKLPTRPGLNKAQLVEIVGCHFKSIPVNEKDTLTCFIYSVRNDKNKSDLKADSGVH.

The segment at 1-129 (MNGFTPEEMS…QSVRNRRKRK (129 aa)) is interaction with NCOR1. Thr5 carries the phosphothreonine modification. An Atypical zinc finger spans residues 67–115 (CCLREDGERCGRAAGNASFSKRIQKSISQKKVKIELDKSARHLYICDYH). Lys87 is covalently cross-linked (Glycyl lysine isopeptide (Lys-Gly) (interchain with G-Cter in SUMO2)). The tract at residues 123 to 143 (RNRRKRKGSDDDGGDSPVQDI) is disordered. The interaction with SIN3A stretch occupies residues 130–220 (GSDDDGGDSP…SDLKADSGVH (91 aa)). Residues Ser131 and Ser138 each carry the phosphoserine modification. A Phosphothreonine modification is found at Thr145. Glycyl lysine isopeptide (Lys-Gly) (interchain with G-Cter in SUMO2) cross-links involve residues Lys194 and Lys214.

The protein belongs to the SAP30 family. In terms of assembly, component of the histone deacetylase complex that includes at least SIN3A, HDAC1 and HDAC2. Found in a complex composed of at least SINHCAF, SIN3A, HDAC1, SAP30, RBBP4, OGT and TET1. Interacts with HDAC1. Interacts with SIN3A, SIN3B, HDAC2, RBBP4 and NCOR1. Interacts directly with SAMSN1. Interacts with HCFC1. Interacts with SAP30BP.

The protein resides in the nucleus. Functionally, involved in the functional recruitment of the Sin3-histone deacetylase complex (HDAC) to a specific subset of N-CoR corepressor complexes. Capable of transcription repression by N-CoR. Active in deacetylating core histone octamers (when in a complex) but inactive in deacetylating nucleosomal histones. This chain is Histone deacetylase complex subunit SAP30, found in Mus musculus (Mouse).